The chain runs to 99 residues: Co-chaperonin GroES (99 aa).

The protein belongs to the GroES chaperonin family. Heptamer of 7 subunits arranged in a ring. Interacts with the chaperonin GroEL.

The protein resides in the cytoplasm. Together with the chaperonin GroEL, plays an essential role in assisting protein folding. The GroEL-GroES system forms a nano-cage that allows encapsulation of the non-native substrate proteins and provides a physical environment optimized to promote and accelerate protein folding. GroES binds to the apical surface of the GroEL ring, thereby capping the opening of the GroEL channel. This Rhodococcus erythropolis (strain PR4 / NBRC 100887) protein is Co-chaperonin GroES.